A 159-amino-acid chain; its full sequence is 2-C-methyl-D-erythritol 2,4-cyclodiphosphate synthase (159 aa).

Positions 10 and 12 each coordinate a divalent metal cation. 4-CDP-2-C-methyl-D-erythritol 2-phosphate is bound by residues 10-12 (DVH) and 36-37 (HS). H44 contributes to the a divalent metal cation binding site. Residues 58-60 (DIG), 63-67 (FPDTD), 102-108 (AQAPKMA), 134-137 (TTTE), F141, and R144 each bind 4-CDP-2-C-methyl-D-erythritol 2-phosphate.

This sequence belongs to the IspF family. As to quaternary structure, homotrimer. Requires a divalent metal cation as cofactor.

The enzyme catalyses 4-CDP-2-C-methyl-D-erythritol 2-phosphate = 2-C-methyl-D-erythritol 2,4-cyclic diphosphate + CMP. Its pathway is isoprenoid biosynthesis; isopentenyl diphosphate biosynthesis via DXP pathway; isopentenyl diphosphate from 1-deoxy-D-xylulose 5-phosphate: step 4/6. Involved in the biosynthesis of isopentenyl diphosphate (IPP) and dimethylallyl diphosphate (DMAPP), two major building blocks of isoprenoid compounds. Catalyzes the conversion of 4-diphosphocytidyl-2-C-methyl-D-erythritol 2-phosphate (CDP-ME2P) to 2-C-methyl-D-erythritol 2,4-cyclodiphosphate (ME-CPP) with a corresponding release of cytidine 5-monophosphate (CMP). The polypeptide is 2-C-methyl-D-erythritol 2,4-cyclodiphosphate synthase (Idiomarina loihiensis (strain ATCC BAA-735 / DSM 15497 / L2-TR)).